Reading from the N-terminus, the 141-residue chain is VLTGEDKKHVQHIWGLLSGAEEDLGAEVLYRMFQSYPPTKTYFPHFDVTQGSEQIRGHGKKFMAALGNAVKNVDNLSQALSELSNLHAYNLRVDPVNFKFLSQCLQVALAARLGKEYSPEVHSAVDKFMAAVAAVLAEKYR.

The Globin domain maps to Val-1–Arg-141. The heme b site is built by His-58 and His-87.

This sequence belongs to the globin family. In terms of assembly, heterotetramer of two alpha-D chains and two beta chains. In terms of tissue distribution, red blood cells.

Its function is as follows. Involved in oxygen transport from the lung to the various peripheral tissues. The protein is Hemoglobin subunit alpha-D (HBAD) of Turdus merula (Common blackbird).